The following is a 475-amino-acid chain: FAD-dependent monooxygenase spyC (475 aa).

Positions 1-24 are cleaved as a signal peptide; it reads MTAKPPFKVIIVGGSIAGLTLAHC. 5 residues coordinate FAD: E36, G50, R109, D310, and A323. A helical transmembrane segment spans residues 444-464; the sequence is LLIPFLYPVVAFSLCVLAWIG.

Belongs to the paxM FAD-dependent monooxygenase family. The cofactor is FAD.

The protein localises to the membrane. It catalyses the reaction (2E,6E,10E)-geranylgeranyl-triacetate lactone + AH2 + O2 = (S)-(2E,6E,10E)-epoxygeranylgeranyl-triacetate lactone + A + H2O. Its pathway is secondary metabolite biosynthesis; terpenoid biosynthesis. Functionally, FAD-dependent monooxygenase spyC; part of the gene cluster that mediates the biosynthesis of meroterpenoids called sartorypyrones. Within the pathway, spyC catalyzes the epoxidation of geranylgeranyl-triacetate lactone at the terminal olein to yield epoxygeranylgeranyl-triacetate lactone. The biosynthesis of sartorypyrones begins with the production of triacetic acid lactone (TAL) by the NR-PKS spyA using one molecule of acetyl-CoA and two molecules of malonyl-CoA. The prenyltransferase spyF then conjugates geranylgeranyl pyrophosphate (GGPP) to TAL to form geranylgeranyl-triacetate lactone, for which the pathway-specific geranylgeranyl pyrophosphate synthase (GGPS) spyE is required to provide GGPP. Subsequently, geranylgeranyl-triacetate lactone is epoxidized at the terminal olein by the FAD-dependent monooxygenase spyC, followed by cyclization of the terpenoid component catalyzed by the terpene cyclase spyD to produce both the bicyclic sartorypyrone F and the monocyclic sartorypyrone D. Finally, the last step of the biosynthesis involves the acetylation of the meroterpenoids sartorypyrones D and F by the acetyltransferase SpyB to produce sartorypyrones A and G, respectively. The protein is FAD-dependent monooxygenase spyC of Aspergillus fumigatus (strain ATCC MYA-4609 / CBS 101355 / FGSC A1100 / Af293) (Neosartorya fumigata).